The following is a 159-amino-acid chain: Nucleotide-binding protein Psyr_4087 (159 aa).

It belongs to the YajQ family.

Its function is as follows. Nucleotide-binding protein. In Pseudomonas syringae pv. syringae (strain B728a), this protein is Nucleotide-binding protein Psyr_4087.